The sequence spans 126 residues: Protein ApaG (126 aa).

The region spanning 2-126 is the ApaG domain; the sequence is SDTQHQVNVR…FRLAVPGALH (125 aa).

In Pseudomonas paraeruginosa (strain DSM 24068 / PA7) (Pseudomonas aeruginosa (strain PA7)), this protein is Protein ApaG.